The sequence spans 54 residues: Phorbol-12-myristate-13-acetate-induced protein 1 (54 aa).

The short motif at 29-37 (LRRFGDKLN) is the BH3 element. Residues 41-50 (KLLNLISKLF) form a required for mitochondrial location region.

Belongs to the PMAIP1 family. In terms of assembly, interacts with MCL1. Interacts with BCL2A1. Interacts with BAX. Interacts with BCL2L10. As to expression, highly expressed in adult T-cell leukemia cell line.

It is found in the mitochondrion. Its function is as follows. Promotes activation of caspases and apoptosis. Promotes mitochondrial membrane changes and efflux of apoptogenic proteins from the mitochondria. Contributes to p53/TP53-dependent apoptosis after radiation exposure. Promotes proteasomal degradation of MCL1. Competes with BAK1 for binding to MCL1 and can displace BAK1 from its binding site on MCL1. Competes with BIM/BCL2L11 for binding to MCL1 and can displace BIM/BCL2L11 from its binding site on MCL1. This is Phorbol-12-myristate-13-acetate-induced protein 1 (PMAIP1) from Homo sapiens (Human).